Consider the following 126-residue polypeptide: Pancreatic polypeptide prohormone (126 aa).

The N-terminal stretch at 1–26 (MTATRCCLWLLLLGTCMALLLPEAWG) is a signal peptide. Tyr62 bears the Tyrosine amide mark. The disordered stretch occupies residues 77 to 126 (RQSHAAAPGGSHRHPPAGLPAAKGGTGVSGSPPKPWDCLPCRAHSLPSQS).

The protein belongs to the NPY family. No icosapeptide-like peptide is cleaved from the C-terminal.

It is found in the secreted. Functionally, hormone secreted by pancreatic cells that acts as a regulator of pancreatic and gastrointestinal functions probably by signaling through the G protein-coupled receptor NPY4R2. In Cavia porcellus (Guinea pig), this protein is Pancreatic polypeptide prohormone (PPY).